A 703-amino-acid chain; its full sequence is MAVAVRTLQEQLEKAKESLKNVDENIRKLTGRDPNDVRPIQARLLALSGPGGGRGRGSLLLRRGFSDSGGGPPAKQRDLEGAVSRLGGERRTRRESRQESDPEDDDVKKPALQSSVVATSKERSTERPLFQDQNTDEKETPERPGPIFGLLMGTLQKFKQESTVATERQKRRQEIEQKLEVQAEEERKQVENERRELFEERRAKQTELRLLEQKVELAQLQEEWNEHNAKIIKYIRTKTKPHLFYIPGRMCPAPKLIEESQRKTNALFEGRRIEFAEQINKMEARPRRQSMKEKEHQVVVRNEEQKSEQEEGKVAPRTRVMLRALDDLVARVGTPSPRRGSGEEEEKEIPIVHSDAEKEQEEEEQKQEMEVKMEEETEVRESEKQQDSQPEEVMDVLEMVESVKNVIAEQEVMETNQVERVEPSENEASKELEPEMEFEIEPDKECKSLSPGKENASTLEMENEPEEKEEKESEPQPEPMAQPQAQSLPQPQPQRHRQSQSQPQQYSSPPPLSQPETLPLAVSQPPPQLIQRQGHLPPERKEFLVESVKLTEVPTEPVLTVHSESKYETKTRSRSRGRARNRTSKSRSRSSSSSSSSSSSTSSSSGSSSSSGSSSSRTSSSSSSTSGSSSRDSSSSTTSSSESRSRSRGRGHNRDRKHRRSVDRKRRDASGLERSHKSAKGGSSRDAKAVSSSGMPRFKPGQL.

Residue Ala2 is modified to N-acetylalanine. Residues 2-32 (AVAVRTLQEQLEKAKESLKNVDENIRKLTGR) are a coiled coil. The segment at 46 to 148 (ALSGPGGGRG…ETPERPGPIF (103 aa)) is disordered. At Ser48 the chain carries Phosphoserine. Arg54 bears the Omega-N-methylarginine mark. 4 positions are modified to phosphoserine: Ser58, Ser66, Ser96, and Ser100. A compositionally biased stretch (basic and acidic residues) spans 87 to 100 (GGERRTRRESRQES). Lys109 participates in a covalent cross-link: Glycyl lysine isopeptide (Lys-Gly) (interchain with G-Cter in SUMO2). Residues Ser114 and Ser115 each carry the phosphoserine modification. Lys121 participates in a covalent cross-link: Glycyl lysine isopeptide (Lys-Gly) (interchain with G-Cter in SUMO2). Position 125 is a phosphothreonine (Thr125). Glycyl lysine isopeptide (Lys-Gly) (interchain with G-Cter in SUMO2) cross-links involve residues Lys138 and Lys157. A Glycyl lysine isopeptide (Lys-Gly) (interchain with G-Cter in SUMO1); alternate cross-link involves residue Lys159. Lys159 is covalently cross-linked (Glycyl lysine isopeptide (Lys-Gly) (interchain with G-Cter in SUMO2); alternate). Residues 165-236 (ATERQKRRQE…HNAKIIKYIR (72 aa)) adopt a coiled-coil conformation. The tract at residues 223 to 285 (EWNEHNAKII…AEQINKMEAR (63 aa)) is sufficient for PSAP complex assembly. Lys230 is covalently cross-linked (Glycyl lysine isopeptide (Lys-Gly) (interchain with G-Cter in SUMO2)). Lys240 carries the N6-acetyllysine; alternate modification. Lys240 is modified (N6-succinyllysine; alternate). Glycyl lysine isopeptide (Lys-Gly) (interchain with G-Cter in SUMO2) cross-links involve residues Lys281, Lys306, and Lys313. Disordered regions lie at residues 284-314 (ARPR…EGKV), 331-394 (RVGT…EEVM), and 408-703 (AEQE…PGQL). Basic and acidic residues-rich tracts occupy residues 348–357 (EIPIVHSDAE) and 366–386 (KQEM…EKQQ). The residue at position 354 (Ser354) is a Phosphoserine. Residues 354-411 (SDAEKEQEEEEQKQEMEVKMEEETEVRESEKQQDSQPEEVMDVLEMVESVKNVIAEQE) adopt a coiled-coil conformation. Glycyl lysine isopeptide (Lys-Gly) (interchain with G-Cter in SUMO2) cross-links involve residues Lys366 and Lys372. Phosphoserine is present on residues Ser382 and Ser388. A compositionally biased stretch (basic and acidic residues) spans 417-433 (QVERVEPSENEASKELE). Ser450 and Ser457 each carry phosphoserine. Residues 479–489 (PMAQPQAQSLP) show a composition bias toward low complexity. Glycyl lysine isopeptide (Lys-Gly) (interchain with G-Cter in SUMO2) cross-links involve residues Lys541 and Lys549. Ser565 carries the post-translational modification Phosphoserine. Lys566 is covalently cross-linked (Glycyl lysine isopeptide (Lys-Gly) (interchain with G-Cter in SUMO2)). A compositionally biased stretch (basic residues) spans 572 to 588 (RSRSRGRARNRTSKSRS). The span at 589 to 642 (RSSSSSSSSSSSTSSSSGSSSSSGSSSSRTSSSSSSTSGSSSRDSSSSTTSSSE) shows a compositional bias: low complexity. A compositionally biased stretch (basic residues) spans 646–664 (RSRGRGHNRDRKHRRSVDR). Over residues 665-676 (KRRDASGLERSH) the composition is skewed to basic and acidic residues. 2 positions are modified to phosphoserine: Ser670 and Ser691.

It belongs to the pinin family. As to quaternary structure, found in a mRNA splicing-dependent exon junction complex (EJC). Found in a complex with SR proteins. Found in a mRNP complex with RNPS1. Component of the PSAP complex consisting of RNPS1, SAP18 and PNN. Interacts with PNISR, CTBP1, CTBP2, KRT8, KRT18, KRT19, PS1D/PNO40, PPIG, RNPS1, SFRS4 and SRRM2. Identified in the spliceosome C complex.

The protein localises to the nucleus speckle. It is found in the cell junction. Its subcellular location is the desmosome. Transcriptional activator binding to the E-box 1 core sequence of the E-cadherin promoter gene; the core-binding sequence is 5'CAGGTG-3'. Capable of reversing CTBP1-mediated transcription repression. Auxiliary component of the splicing-dependent multiprotein exon junction complex (EJC) deposited at splice junction on mRNAs. The EJC is a dynamic structure consisting of core proteins and several peripheral nuclear and cytoplasmic associated factors that join the complex only transiently either during EJC assembly or during subsequent mRNA metabolism. Participates in the regulation of alternative pre-mRNA splicing. Associates to spliced mRNA within 60 nt upstream of the 5'-splice sites. Component of the PSAP complex which binds RNA in a sequence-independent manner and is proposed to be recruited to the EJC prior to or during the splicing process and to regulate specific excision of introns in specific transcription subsets. Involved in the establishment and maintenance of epithelia cell-cell adhesion. In Bos taurus (Bovine), this protein is Pinin (PNN).